The chain runs to 765 residues: Probable dipeptidyl peptidase 4 (765 aa).

The signal sequence occupies residues 1–14 (MKWSILLLVGCAAA). Residues Asn-35, Asn-78, Asn-101, Asn-110, Asn-169, Asn-218, Asn-465, and Asn-490 are each glycosylated (N-linked (GlcNAc...) asparagine). Catalysis depends on Ser-613, which acts as the Charge relay system. Residue Asn-665 is glycosylated (N-linked (GlcNAc...) asparagine). Catalysis depends on charge relay system residues Asp-690 and His-725.

Belongs to the peptidase S9B family.

It is found in the secreted. The enzyme catalyses Release of an N-terminal dipeptide, Xaa-Yaa-|-Zaa-, from a polypeptide, preferentially when Yaa is Pro, provided Zaa is neither Pro nor hydroxyproline.. In terms of biological role, extracellular dipeptidyl-peptidase which removes N-terminal dipeptides sequentially from polypeptides having unsubstituted N-termini provided that the penultimate residue is proline. Contributes to pathogenicity. This chain is Probable dipeptidyl peptidase 4 (dpp4), found in Aspergillus fumigatus (strain CBS 144.89 / FGSC A1163 / CEA10) (Neosartorya fumigata).